The following is a 414-amino-acid chain: uncharacterized protein (414 aa).

A signal peptide spans 1 to 16; the sequence is MRVILLLAFLISLTEC. One can recognise a Myb-like 1 domain in the interval 20 to 59; the sequence is SEDLALYDLVEEVGVNFYEWFDIPRDASSNQVKKAYRKLT. The region spanning 35–99 is the J domain; that stretch reads NFYEWFDIPR…ELREKYDNVL (65 aa). A helical membrane pass occupies residues 125–145; the sequence is ILVLLFIGTIAHYLMMWAAYF. The interval 211–234 is disordered; the sequence is MTPKEVEPEEPTEEELAQQRRQQR. Positions 217–226 are enriched in acidic residues; that stretch reads EPEEPTEEEL. The region spanning 274–320 is the Myb-like 2 domain; the sequence is AQKQSGATWTPDELASLVRLSTEKYPAGTPNRWEQMGRVLNRSAEDV. Residues 352-407 form the SANT domain; that stretch reads KSEDDWSQAEQKAFETALQKYPKGTDERWERISEEIGSKTKKQVMVRFKQLAEMIR.

The protein localises to the nucleus membrane. This is an uncharacterized protein from Caenorhabditis elegans.